A 146-amino-acid polypeptide reads, in one-letter code: Hemoglobin subunit delta (146 aa).

Residues H2–H146 enclose the Globin domain. Position 50 is a phosphoserine (S50). Heme b is bound by residues H63 and H92.

It belongs to the globin family. As to quaternary structure, heterotetramer of two delta chains and two alpha chains. Red blood cells.

This chain is Hemoglobin subunit delta (HBD), found in Aotus trivirgatus (Three-striped night monkey).